The primary structure comprises 175 residues: Peptide deformylase (175 aa).

Fe cation is bound by residues C96 and H138. Residue E139 is part of the active site. H142 is a Fe cation binding site.

The protein belongs to the polypeptide deformylase family. It depends on Fe(2+) as a cofactor.

The enzyme catalyses N-terminal N-formyl-L-methionyl-[peptide] + H2O = N-terminal L-methionyl-[peptide] + formate. In terms of biological role, removes the formyl group from the N-terminal Met of newly synthesized proteins. Requires at least a dipeptide for an efficient rate of reaction. N-terminal L-methionine is a prerequisite for activity but the enzyme has broad specificity at other positions. The chain is Peptide deformylase from Helicobacter pylori (strain Shi470).